The primary structure comprises 226 residues: Small ribosomal subunit protein uS3 (226 aa).

The KH type-2 domain occupies 39-107 (IRAYIKKNVV…EVTLNIKEVK (69 aa)).

It belongs to the universal ribosomal protein uS3 family. As to quaternary structure, part of the 30S ribosomal subunit. Forms a tight complex with proteins S10 and S14.

Its function is as follows. Binds the lower part of the 30S subunit head. Binds mRNA in the 70S ribosome, positioning it for translation. The polypeptide is Small ribosomal subunit protein uS3 (Pelagibacter ubique (strain HTCC1062)).